Here is a 273-residue protein sequence, read N- to C-terminus: Formamidopyrimidine-DNA glycosylase (273 aa).

P2 functions as the Schiff-base intermediate with DNA in the catalytic mechanism. E3 serves as the catalytic Proton donor. The Proton donor; for beta-elimination activity role is filled by K58. DNA-binding residues include H91, R109, and R154. The segment at 239–273 (FVYARTGEPCRICNAPVRQIVQGQRSTFYCPNCQK) adopts an FPG-type zinc-finger fold. R263 (proton donor; for delta-elimination activity) is an active-site residue.

Belongs to the FPG family. In terms of assembly, monomer. It depends on Zn(2+) as a cofactor.

The enzyme catalyses Hydrolysis of DNA containing ring-opened 7-methylguanine residues, releasing 2,6-diamino-4-hydroxy-5-(N-methyl)formamidopyrimidine.. It carries out the reaction 2'-deoxyribonucleotide-(2'-deoxyribose 5'-phosphate)-2'-deoxyribonucleotide-DNA = a 3'-end 2'-deoxyribonucleotide-(2,3-dehydro-2,3-deoxyribose 5'-phosphate)-DNA + a 5'-end 5'-phospho-2'-deoxyribonucleoside-DNA + H(+). Involved in base excision repair of DNA damaged by oxidation or by mutagenic agents. Acts as a DNA glycosylase that recognizes and removes damaged bases. Has a preference for oxidized purines, such as 7,8-dihydro-8-oxoguanine (8-oxoG). Has AP (apurinic/apyrimidinic) lyase activity and introduces nicks in the DNA strand. Cleaves the DNA backbone by beta-delta elimination to generate a single-strand break at the site of the removed base with both 3'- and 5'-phosphates. This Herminiimonas arsenicoxydans protein is Formamidopyrimidine-DNA glycosylase.